Here is a 269-residue protein sequence, read N- to C-terminus: Chymotrypsin-like elastase family member 3B (269 aa).

An N-terminal signal peptide occupies residues 1-16; it reads MLRLLSSLLLVALASG. Residues 17-27 constitute a propeptide, activation peptide; that stretch reads CGQPSHNPSSR. The Peptidase S1 domain maps to 28-267; sequence VVNGEEAVPH…FIDWIEETIA (240 aa). Cysteine 57 and cysteine 73 are oxidised to a cystine. Active-site charge relay system residues include histidine 72 and aspartate 122. Disulfide bonds link cysteine 156–cysteine 222, cysteine 187–cysteine 203, and cysteine 212–cysteine 243. The active-site Charge relay system is serine 216.

It belongs to the peptidase S1 family. Elastase subfamily.

The enzyme catalyses Preferential cleavage: Ala-|-Xaa. Does not hydrolyze elastin.. Efficient protease with alanine specificity but only little elastolytic activity. The protein is Chymotrypsin-like elastase family member 3B (Cela3b) of Mus musculus (Mouse).